The sequence spans 138 residues: Ribosome-binding factor A (138 aa).

The protein belongs to the RbfA family. As to quaternary structure, monomer. Binds 30S ribosomal subunits, but not 50S ribosomal subunits or 70S ribosomes.

Its subcellular location is the cytoplasm. One of several proteins that assist in the late maturation steps of the functional core of the 30S ribosomal subunit. Associates with free 30S ribosomal subunits (but not with 30S subunits that are part of 70S ribosomes or polysomes). Required for efficient processing of 16S rRNA. May interact with the 5'-terminal helix region of 16S rRNA. The chain is Ribosome-binding factor A from Paracoccus denitrificans (strain Pd 1222).